The following is a 370-amino-acid chain: Chaperone protein DnaJ (370 aa).

Residues 6–70 (DYYEVLGVQR…EKRSMYDRFG (65 aa)) form the J domain. A CR-type zinc finger spans residues 128–208 (GVEKTIEYRR…CRGEGRIRQT (81 aa)). The Zn(2+) site is built by Cys-141, Cys-144, Cys-158, Cys-161, Cys-182, Cys-185, Cys-196, and Cys-199. CXXCXGXG motif repeat units lie at residues 141-148 (CPACRGSG), 158-165 (CPKCGGLG), 182-189 (CDMCRGEG), and 196-203 (CRECRGEG).

The protein belongs to the DnaJ family. In terms of assembly, homodimer. It depends on Zn(2+) as a cofactor.

It localises to the cytoplasm. Participates actively in the response to hyperosmotic and heat shock by preventing the aggregation of stress-denatured proteins and by disaggregating proteins, also in an autonomous, DnaK-independent fashion. Unfolded proteins bind initially to DnaJ; upon interaction with the DnaJ-bound protein, DnaK hydrolyzes its bound ATP, resulting in the formation of a stable complex. GrpE releases ADP from DnaK; ATP binding to DnaK triggers the release of the substrate protein, thus completing the reaction cycle. Several rounds of ATP-dependent interactions between DnaJ, DnaK and GrpE are required for fully efficient folding. Also involved, together with DnaK and GrpE, in the DNA replication of plasmids through activation of initiation proteins. The polypeptide is Chaperone protein DnaJ (Roseiflexus castenholzii (strain DSM 13941 / HLO8)).